Here is an 834-residue protein sequence, read N- to C-terminus: Glycerol-3-phosphate acyltransferase (834 aa).

Residues 304-309 (CHRSHM) carry the HXXXXD motif motif. The disordered stretch occupies residues 800 to 834 (SVSMPAETSNQPEAPETPETPETPETPEPEGKTES).

This sequence belongs to the GPAT/DAPAT family.

The protein resides in the cell inner membrane. The enzyme catalyses sn-glycerol 3-phosphate + an acyl-CoA = a 1-acyl-sn-glycero-3-phosphate + CoA. It functions in the pathway phospholipid metabolism; CDP-diacylglycerol biosynthesis; CDP-diacylglycerol from sn-glycerol 3-phosphate: step 1/3. The polypeptide is Glycerol-3-phosphate acyltransferase (Yersinia pseudotuberculosis serotype I (strain IP32953)).